We begin with the raw amino-acid sequence, 80 residues long: MKPWILLLLAGLLILSTQLTTAKTTKQLRLPKVKPGECPKVKIPPDYPCNQYCVWDFDCEGNKKCCPVGCAKECFPPGPL.

The N-terminal stretch at 1–22 (MKPWILLLLAGLLILSTQLTTA) is a signal peptide. The 48-residue stretch at 31–78 (PKVKPGECPKVKIPPDYPCNQYCVWDFDCEGNKKCCPVGCAKECFPPG) folds into the WAP domain. 4 disulfide bridges follow: C38-C66, C49-C70, C53-C65, and C59-C74.

This sequence belongs to the venom waprin family. Expressed by the venom gland.

Its subcellular location is the secreted. Damages membranes of susceptible bacteria. Has no hemolytic activity. Not toxic to mice. Does not inhibit the proteinases elastase and cathepsin G. In Philodryas olfersii (Green snake), this protein is Waprin-Phi3.